A 217-amino-acid chain; its full sequence is Adenylate kinase (217 aa).

10-15 (GAGKGT) is an ATP binding site. Residues 30–59 (STGDMFRAAMKEGTPLGLQAKQYMDRGDLV) are NMP. AMP contacts are provided by residues T31, R36, 57–59 (DLV), 85–88 (GFPR), and Q92. The tract at residues 126 to 163 (GRRICRNCGATYHLIFHPPAKPGVCDKCGGELYQRADD) is LID. R127 provides a ligand contact to ATP. Zn(2+) contacts are provided by C130 and C133. Residue 136 to 137 (TY) participates in ATP binding. Positions 150 and 153 each coordinate Zn(2+). Residues R160 and R171 each contribute to the AMP site. Residue Q199 participates in ATP binding.

Belongs to the adenylate kinase family. As to quaternary structure, monomer.

It is found in the cytoplasm. The enzyme catalyses AMP + ATP = 2 ADP. It participates in purine metabolism; AMP biosynthesis via salvage pathway; AMP from ADP: step 1/1. Functionally, catalyzes the reversible transfer of the terminal phosphate group between ATP and AMP. Plays an important role in cellular energy homeostasis and in adenine nucleotide metabolism. This chain is Adenylate kinase, found in Geobacillus stearothermophilus (Bacillus stearothermophilus).